Here is a 204-residue protein sequence, read N- to C-terminus: Holliday junction branch migration complex subunit RuvA (204 aa).

The interval 1–64 (MIGRLRGIIL…EDAQLLFGFN (64 aa)) is domain I. Residues 65-143 (SKPERALFRE…GMHGDLFASD (79 aa)) form a domain II region. The flexible linker stretch occupies residues 144–155 (APFALTSEMPKE). The interval 156–204 (TANDAEGEAVAALTALGYKPQEASRMIVKVGKPDADCETLIREALRAAI) is domain III.

This sequence belongs to the RuvA family. In terms of assembly, homotetramer. Forms an RuvA(8)-RuvB(12)-Holliday junction (HJ) complex. HJ DNA is sandwiched between 2 RuvA tetramers; dsDNA enters through RuvA and exits via RuvB. An RuvB hexamer assembles on each DNA strand where it exits the tetramer. Each RuvB hexamer is contacted by two RuvA subunits (via domain III) on 2 adjacent RuvB subunits; this complex drives branch migration. In the full resolvosome a probable DNA-RuvA(4)-RuvB(12)-RuvC(2) complex forms which resolves the HJ.

It is found in the cytoplasm. The RuvA-RuvB-RuvC complex processes Holliday junction (HJ) DNA during genetic recombination and DNA repair, while the RuvA-RuvB complex plays an important role in the rescue of blocked DNA replication forks via replication fork reversal (RFR). RuvA specifically binds to HJ cruciform DNA, conferring on it an open structure. The RuvB hexamer acts as an ATP-dependent pump, pulling dsDNA into and through the RuvAB complex. HJ branch migration allows RuvC to scan DNA until it finds its consensus sequence, where it cleaves and resolves the cruciform DNA. The polypeptide is Holliday junction branch migration complex subunit RuvA (Erwinia tasmaniensis (strain DSM 17950 / CFBP 7177 / CIP 109463 / NCPPB 4357 / Et1/99)).